The chain runs to 464 residues: Mitogen-activated protein kinase 10 (464 aa).

Residues 64–359 form the Protein kinase domain; sequence YQNLKPIGSG…VDDALQHPYI (296 aa). ATP contacts are provided by residues 70 to 78 and K93; that span reads IGSGAQGIV. The active-site Proton acceptor is the D189. T221 carries the post-translational modification Phosphothreonine; by MAP2K7. The short motif at 221–223 is the TXY element; it reads TPY. At Y223 the chain carries Phosphotyrosine; by MAP2K4. Residues 405–464 form a disordered region; that stretch reads TKNGVVKGQPSPSGAAVNSSESLPPSSSVNDISSMSTDQTLASDTDSSLEASAGPLGCCR. A compositionally biased stretch (low complexity) spans 423-432; the sequence is SSESLPPSSS. Residues 433-454 show a composition bias toward polar residues; it reads VNDISSMSTDQTLASDTDSSLE. 2 S-palmitoyl cysteine lipidation sites follow: C462 and C463.

This sequence belongs to the protein kinase superfamily. CMGC Ser/Thr protein kinase family. MAP kinase subfamily. In terms of assembly, interacts with MAPK8IP1/JIP-1 and MAPK8IP3/JIP-3/JSAP1. Interacts with SPAG9/MAPK8IP4/JIP4. Interacts with HDAC9 and MAPKBP1. Interacts with ARRB2; the interaction enhances MAPK10 activation by MAP3K5. Interacts with SARM1. Interacts with JUND; interaction is inhibited in the presence of MEN1. The cofactor is Mg(2+). Post-translationally, dually phosphorylated on Thr-221 and Tyr-223 by MAP2K4 and MAP2K7, which activates the enzyme. MAP2K7 shows a strong preference for Thr-221 while MAP2K4 phosphorylates Tyr-223 preferentially. Weakly autophosphorylated on threonine and tyrosine residues in vitro. In terms of processing, palmitoylation regulates subcellular location and axonal development.

The protein localises to the cytoplasm. Its subcellular location is the membrane. It localises to the nucleus. It is found in the mitochondrion. The catalysed reaction is L-seryl-[protein] + ATP = O-phospho-L-seryl-[protein] + ADP + H(+). The enzyme catalyses L-threonyl-[protein] + ATP = O-phospho-L-threonyl-[protein] + ADP + H(+). Activated by threonine and tyrosine phosphorylation by two dual specificity kinases, MAP2K4 and MAP2K7. MAP2K7 phosphorylates MAPK10 on Thr-221 causing a conformational change and a large increase in Vmax for the enzyme. MAP2K4 then phosphorylates Tyr-223 resulting in a further increase in Vmax. Inhibited by dual specificity phosphatases, such as DUSP1. Inhibited by HDAC9. Serine/threonine-protein kinase involved in various processes such as neuronal proliferation, differentiation, migration and programmed cell death. Extracellular stimuli such as pro-inflammatory cytokines or physical stress stimulate the stress-activated protein kinase/c-Jun N-terminal kinase (SAP/JNK) signaling pathway. In this cascade, two dual specificity kinases MAP2K4/MKK4 and MAP2K7/MKK7 phosphorylate and activate MAPK10/JNK3. In turn, MAPK10/JNK3 phosphorylates a number of transcription factors, primarily components of AP-1 such as JUN and ATF2 and thus regulates AP-1 transcriptional activity. Plays regulatory roles in the signaling pathways during neuronal apoptosis. Phosphorylates the neuronal microtubule regulator STMN2. Acts in the regulation of the amyloid-beta precursor protein/APP signaling during neuronal differentiation by phosphorylating APP. Also participates in neurite growth in spiral ganglion neurons. Phosphorylates the CLOCK-BMAL1 heterodimer and plays a role in the photic regulation of the circadian clock. Phosphorylates JUND and this phosphorylation is inhibited in the presence of MEN1. The polypeptide is Mitogen-activated protein kinase 10 (Mapk10) (Rattus norvegicus (Rat)).